Here is a 334-residue protein sequence, read N- to C-terminus: D-aspartate oxidase 2 (334 aa).

FAD contacts are provided by Asp-38, Lys-39, Ser-46, Gly-310, and Thr-315.

This sequence belongs to the DAMOX/DASOX family. FAD serves as cofactor. As to expression, expressed in the intestinal cells, pharyngeal muscles, and body wall muscles in adult hermaphrodites.

The protein localises to the cytoplasm. The catalysed reaction is D-aspartate + O2 + H2O = oxaloacetate + H2O2 + NH4(+). The enzyme catalyses D-glutamate + O2 + H2O = H2O2 + 2-oxoglutarate + NH4(+). Inhibited by thiolactomycin. In terms of biological role, selectively catalyzes the oxidative deamination of acidic amino acids. May play a role in the egg-laying events and early development of the worm, in addition to quality control of the germ cells. In Caenorhabditis elegans, this protein is D-aspartate oxidase 2 (ddo-2).